The chain runs to 329 residues: Ketol-acid reductoisomerase (NADP(+)) (329 aa).

The KARI N-terminal Rossmann domain maps to 2–182; sequence TQLFYDTDAD…GGTRAGILET (181 aa). Residues 25-28, Ser51, Ser53, and 83-86 each bind NADP(+); these read YGSQ and DEFQ. The active site involves His108. Gly134 contacts NADP(+). The KARI C-terminal knotted domain occupies 183–328; that stretch reads NFKEETETDL…KSLRSMFSWL (146 aa). 4 residues coordinate Mg(2+): Asp191, Glu195, Glu227, and Glu231. Ser252 lines the substrate pocket.

This sequence belongs to the ketol-acid reductoisomerase family. It depends on Mg(2+) as a cofactor.

It catalyses the reaction (2R)-2,3-dihydroxy-3-methylbutanoate + NADP(+) = (2S)-2-acetolactate + NADPH + H(+). It carries out the reaction (2R,3R)-2,3-dihydroxy-3-methylpentanoate + NADP(+) = (S)-2-ethyl-2-hydroxy-3-oxobutanoate + NADPH + H(+). Its pathway is amino-acid biosynthesis; L-isoleucine biosynthesis; L-isoleucine from 2-oxobutanoate: step 2/4. It participates in amino-acid biosynthesis; L-valine biosynthesis; L-valine from pyruvate: step 2/4. Functionally, involved in the biosynthesis of branched-chain amino acids (BCAA). Catalyzes an alkyl-migration followed by a ketol-acid reduction of (S)-2-acetolactate (S2AL) to yield (R)-2,3-dihydroxy-isovalerate. In the isomerase reaction, S2AL is rearranged via a Mg-dependent methyl migration to produce 3-hydroxy-3-methyl-2-ketobutyrate (HMKB). In the reductase reaction, this 2-ketoacid undergoes a metal-dependent reduction by NADPH to yield (R)-2,3-dihydroxy-isovalerate. This is Ketol-acid reductoisomerase (NADP(+)) from Prochlorococcus marinus (strain MIT 9301).